We begin with the raw amino-acid sequence, 286 residues long: Pantothenate synthetase (286 aa).

30–37 (MGNLHAGH) lines the ATP pocket. Catalysis depends on H37, which acts as the Proton donor. A (R)-pantoate-binding site is contributed by Q61. Q61 lines the beta-alanine pocket. 149–152 (GQKD) serves as a coordination point for ATP. Q155 provides a ligand contact to (R)-pantoate. ATP is bound by residues V178 and 186 to 189 (LSSR).

The protein belongs to the pantothenate synthetase family. Homodimer.

It localises to the cytoplasm. It catalyses the reaction (R)-pantoate + beta-alanine + ATP = (R)-pantothenate + AMP + diphosphate + H(+). The protein operates within cofactor biosynthesis; (R)-pantothenate biosynthesis; (R)-pantothenate from (R)-pantoate and beta-alanine: step 1/1. In terms of biological role, catalyzes the condensation of pantoate with beta-alanine in an ATP-dependent reaction via a pantoyl-adenylate intermediate. In Stutzerimonas stutzeri (strain A1501) (Pseudomonas stutzeri), this protein is Pantothenate synthetase.